Here is a 136-residue protein sequence, read N- to C-terminus: Large ribosomal subunit protein uL16 (136 aa).

The protein belongs to the universal ribosomal protein uL16 family. Part of the 50S ribosomal subunit.

Binds 23S rRNA and is also seen to make contacts with the A and possibly P site tRNAs. In Yersinia enterocolitica serotype O:8 / biotype 1B (strain NCTC 13174 / 8081), this protein is Large ribosomal subunit protein uL16.